We begin with the raw amino-acid sequence, 717 residues long: Choline transporter-like protein 5 (717 aa).

Residues 1 to 24 (MNDTEKPADTASEEEDFGDPRTYD) are disordered. Residues 1-38 (MNDTEKPADTASEEEDFGDPRTYDPDFKGPVSNRSCTD) lie on the Cytoplasmic side of the membrane. A helical membrane pass occupies residues 39-59 (VLCCMIFLLCIVGYIVLGLVA). Over 60–242 (WVHGDPRRAA…KVFEDYATTW (183 aa)) the chain is Extracellular. Asn88 and Asn190 each carry an N-linked (GlcNAc...) asparagine glycan. Residues 243 to 263 (YWILIGLMIAMVLSWIFLILL) form a helical membrane-spanning segment. Over 264–265 (RF) the chain is Cytoplasmic. A helical membrane pass occupies residues 266–286 (IAGCLFWVFMIGVIGIIGYGI). Residues 287-325 (WHCYQQYTNLQEHPRSVLTVYDIGIQTNISMYFELQQTW) lie on the Extracellular side of the membrane. The N-linked (GlcNAc...) asparagine glycan is linked to Asn314. A helical membrane pass occupies residues 326 to 346 (FTLMIILCIIEVIVILMLIFL). The Cytoplasmic portion of the chain corresponds to 347–351 (RNRIR). Residues 352–372 (VAIILLKEGSKAIGYVPSTLV) form a helical membrane-spanning segment. Residues 373–374 (YP) are Extracellular-facing. A helical transmembrane segment spans residues 375–395 (ALTFILLSICICYWVVTAVFL). The Cytoplasmic segment spans residues 396–460 (ATSGVPVYKV…QYIPTFHVYN (65 aa)). A helical transmembrane segment spans residues 461-481 (LFVFLWLINFVIALGQCALAG). Over 482-515 (AFATYYWAMKKPDDIPRYPLFTAFGRAIRYHTGS) the chain is Extracellular. The helical transmembrane segment at 516-536 (LAFGSLIIALIQMFKIVLEYL) threads the bilayer. At 537–610 (NHRLKRTENT…KVAVTDEVTY (74 aa)) the chain is on the cytoplasmic side. The chain crosses the membrane as a helical span at residues 611–631 (FVLFLGKILVAGSIGVLAFLF). The Extracellular portion of the chain corresponds to 632-649 (FTQRLPVIAQGPASLNYY). The helical transmembrane segment at 650 to 670 (WVPLLTVILGSYLIAHGFFSV) threads the bilayer. Residues 671-717 (YAMCVETIFICFLEDLERNDGSTARPYYVSQPLLKIFQEENLQTKQQ) are Cytoplasmic-facing.

This sequence belongs to the CTL (choline transporter-like) family.

It is found in the cell membrane. It catalyses the reaction choline(out) + n H(+)(in) = choline(in) + n H(+)(out). In terms of biological role, choline/H+ antiporter. In Macaca fascicularis (Crab-eating macaque), this protein is Choline transporter-like protein 5 (SLC44A5).